The following is a 112-amino-acid chain: Protein Churchill (112 aa).

Zn(2+) contacts are provided by C2, C5, C30, C33, H59, C61, C64, H66, H71, C88, and C91.

It belongs to the Churchill family.

Functionally, transcriptional activator that mediates FGF signaling during neural development. Plays a role in the regulation of cell movement. Does not bind DNA by itself. This is Protein Churchill (churc1) from Xenopus laevis (African clawed frog).